The following is a 398-amino-acid chain: Cysteine desulfurase 2 (398 aa).

Pyridoxal 5'-phosphate-binding positions include 71 to 72, Asn-150, Gln-178, and 198 to 200; these read GT and SGH. N6-(pyridoxal phosphate)lysine is present on Lys-201. Thr-236 provides a ligand contact to pyridoxal 5'-phosphate. Cys-323 serves as the catalytic Cysteine persulfide intermediate. Cys-323 contributes to the [2Fe-2S] cluster binding site.

Belongs to the class-V pyridoxal-phosphate-dependent aminotransferase family. NifS/IscS subfamily. Homodimer. Pyridoxal 5'-phosphate serves as cofactor.

It carries out the reaction (sulfur carrier)-H + L-cysteine = (sulfur carrier)-SH + L-alanine. In terms of biological role, catalyzes the removal of elemental sulfur atoms from cysteine to produce alanine. Seems to participate in the biosynthesis of the nitrogenase metalloclusters by providing the inorganic sulfur required for the Fe-S core formation. The polypeptide is Cysteine desulfurase 2 (Trichormus variabilis (strain ATCC 29413 / PCC 7937) (Anabaena variabilis)).